A 585-amino-acid polypeptide reads, in one-letter code: Zinc finger protein Eos (585 aa).

Disordered stretches follow at residues 1 to 43 (MHTP…PDFL) and 68 to 98 (EKEF…SANS). Basic and acidic residues predominate over residues 25-34 (QGKDNLERDP). Residues 79 to 98 (SVSTPNSQHSSPSRSLSANS) are compositionally biased toward polar residues. Residue Lys-100 forms a Glycyl lysine isopeptide (Lys-Gly) (interchain with G-Cter in SUMO2) linkage. Ser-105 carries the post-translational modification Phosphoserine. C2H2-type zinc fingers lie at residues 159–181 (LKCD…KRSH), 187–209 (FHCN…IKLH), 215–237 (FKCP…LRTH), and 248–271 (YKCN…ERCH). Residues 281–585 (AQALAGQPGD…HIVRGEHKVG (305 aa)) form an interaction with FOXP3 region. Lys-335 bears the N6-acetyllysine mark. The interval 410–489 (PGRLELPGSR…QPPPTIVVGR (80 aa)) is disordered. The CTBP-binding motif PEDLA signature appears at 425-429 (PEDLA). Over residues 475–484 (QGPPPQPPPT) the composition is skewed to pro residues. Lys-500 is covalently cross-linked (Glycyl lysine isopeptide (Lys-Gly) (interchain with G-Cter in SUMO2)). 2 C2H2-type zinc fingers span residues 530 to 552 (FKCE…MGCH) and 558 to 582 (FECN…RGEH).

This sequence belongs to the Ikaros C2H2-type zinc-finger protein family. As to quaternary structure, self-associates. Interacts with other family members; IKZF1, IKZF2, IKZF3 and IKZF5. Interacts with CTBP2. Interacts with SPI1, MITF, FOXP3 and CTBP1. As to expression, highly expressed in skeletal muscle, low levels of expression in heart, thymus, kidney, liver, and spleen. Expressed in the hematopoietic cell lines MOLT-4, NALM-6 and K-562. Highly expressed in THP-1 and M-07e cell lines, which have characteristics of myeloid and early megakaryocytic cells respectively.

The protein localises to the nucleus. In terms of biological role, DNA-binding protein that binds to the 5'GGGAATRCC-3' Ikaros-binding sequence. Transcriptional repressor. Interacts with SPI1 and MITF to repress transcription of the CTSK and ACP5 promoters via recruitment of corepressors SIN3A and CTBP2. May be involved in the development of central and peripheral nervous systems. Essential for the inhibitory function of regulatory T-cells (Treg). Mediates FOXP3-mediated gene silencing in regulatory T-cells (Treg) via recruitment of corepressor CTBP1. This chain is Zinc finger protein Eos (IKZF4), found in Homo sapiens (Human).